The primary structure comprises 478 residues: MKVLFASSECAPFFKTGGLGDVAGALPKELAKKSEIDSVAVILPYFKNEMKEEYRSLLKDEFYDFVDVGWRHEYVGVKSLEKEGVKYYFLDNEHYFGRGQLYGYGDDGERFAFFDLALCQLLEKLDFIPDVLHVNDWQTAMVPFLLKEKYNWIKAYEKIKTVLTIHNIEFQGLMHGDALSELFGMGMERYFEGVVRHNGMLNMLKTGILYADRVNTVSPTYAKEIQTSEFGCGLESILQYVDGKVSGILNGIDYDIYNPENDILIPYHFSEEELSGKGQMKAELQKRTGLPLNPNVPLIGMVSRLTNQKGFDLVLSQLEKVLEENVQIVLLGTGFPEIEEGFRYFSQKYPDKLSANIAFDIQFAQEIYAGSDFFLMPSAFEPCGLSQMIAMRYGTLPIVHEIGGLKDTVIPFNPISKEGTGFGFVDFEGQILVETINRALEVYGKEPEVLNKMVLSAMSKDFSWGTKAQQYIELYQEL.

An ADP-alpha-D-glucose-binding site is contributed by Lys-15.

The protein belongs to the glycosyltransferase 1 family. Bacterial/plant glycogen synthase subfamily.

It catalyses the reaction [(1-&gt;4)-alpha-D-glucosyl](n) + ADP-alpha-D-glucose = [(1-&gt;4)-alpha-D-glucosyl](n+1) + ADP + H(+). It functions in the pathway glycan biosynthesis; glycogen biosynthesis. Functionally, synthesizes alpha-1,4-glucan chains using ADP-glucose. This chain is Glycogen synthase, found in Lactococcus lactis subsp. lactis (strain IL1403) (Streptococcus lactis).